The following is a 403-amino-acid chain: Phosphopentomutase (403 aa).

Mn(2+) contacts are provided by D13, D298, H303, D339, H340, and H351.

This sequence belongs to the phosphopentomutase family. Requires Mn(2+) as cofactor.

Its subcellular location is the cytoplasm. It carries out the reaction 2-deoxy-alpha-D-ribose 1-phosphate = 2-deoxy-D-ribose 5-phosphate. The enzyme catalyses alpha-D-ribose 1-phosphate = D-ribose 5-phosphate. The protein operates within carbohydrate degradation; 2-deoxy-D-ribose 1-phosphate degradation; D-glyceraldehyde 3-phosphate and acetaldehyde from 2-deoxy-alpha-D-ribose 1-phosphate: step 1/2. In terms of biological role, isomerase that catalyzes the conversion of deoxy-ribose 1-phosphate (dRib-1-P) and ribose 1-phosphate (Rib-1-P) to deoxy-ribose 5-phosphate (dRib-5-P) and ribose 5-phosphate (Rib-5-P), respectively. The polypeptide is Phosphopentomutase (Streptococcus pneumoniae serotype 2 (strain D39 / NCTC 7466)).